Here is a 509-residue protein sequence, read N- to C-terminus: Light-independent protochlorophyllide reductase subunit B (509 aa).

Position 36 (aspartate 36) interacts with [4Fe-4S] cluster. Aspartate 298 (proton donor) is an active-site residue. A substrate-binding site is contributed by 433–434; that stretch reads GM.

The protein belongs to the ChlB/BchB/BchZ family. Protochlorophyllide reductase is composed of three subunits; ChlL, ChlN and ChlB. Forms a heterotetramer of two ChlB and two ChlN subunits. The cofactor is [4Fe-4S] cluster.

It is found in the plastid. It localises to the chloroplast. It carries out the reaction chlorophyllide a + oxidized 2[4Fe-4S]-[ferredoxin] + 2 ADP + 2 phosphate = protochlorophyllide a + reduced 2[4Fe-4S]-[ferredoxin] + 2 ATP + 2 H2O. Its pathway is porphyrin-containing compound metabolism; chlorophyll biosynthesis (light-independent). Functionally, component of the dark-operative protochlorophyllide reductase (DPOR) that uses Mg-ATP and reduced ferredoxin to reduce ring D of protochlorophyllide (Pchlide) to form chlorophyllide a (Chlide). This reaction is light-independent. The NB-protein (ChlN-ChlB) is the catalytic component of the complex. The chain is Light-independent protochlorophyllide reductase subunit B from Ephedra altissima (High-climbing jointfir).